A 73-amino-acid polypeptide reads, in one-letter code: UPF0435 protein lmo1707 (73 aa).

This sequence belongs to the UPF0435 family.

This Listeria monocytogenes serovar 1/2a (strain ATCC BAA-679 / EGD-e) protein is UPF0435 protein lmo1707.